Consider the following 264-residue polypeptide: Probable membrane transporter protein HI_0902 (264 aa).

A run of 9 helical transmembrane segments spans residues 4–24, 28–48, 49–69, 81–101, 107–127, 147–167, 183–203, 210–230, and 243–263; these read FILLCLLVGALAGFLAGLFGI, LVIVPTLVYLLPIVDVPESLL, MSTALGTSFATIVITGIGSAQ, AVRILAPVIMLSVFICGLFIG, ISAKIFACLVVYLATKMVLSI, ILIGMASSAAGIGGGGFIVPF, AFCGMLLGISGMFSFIVSGWG, YSLGYIYLPAVLGITATSFFT, and VSTLKKGFALFLIVVAINMFL.

Belongs to the 4-toluene sulfonate uptake permease (TSUP) (TC 2.A.102) family.

The protein localises to the cell membrane. This Haemophilus influenzae (strain ATCC 51907 / DSM 11121 / KW20 / Rd) protein is Probable membrane transporter protein HI_0902.